Here is a 195-residue protein sequence, read N- to C-terminus: Imidazoleglycerol-phosphate dehydratase (195 aa).

The protein belongs to the imidazoleglycerol-phosphate dehydratase family.

It is found in the cytoplasm. The enzyme catalyses D-erythro-1-(imidazol-4-yl)glycerol 3-phosphate = 3-(imidazol-4-yl)-2-oxopropyl phosphate + H2O. The protein operates within amino-acid biosynthesis; L-histidine biosynthesis; L-histidine from 5-phospho-alpha-D-ribose 1-diphosphate: step 6/9. In Citrifermentans bemidjiense (strain ATCC BAA-1014 / DSM 16622 / JCM 12645 / Bem) (Geobacter bemidjiensis), this protein is Imidazoleglycerol-phosphate dehydratase.